The chain runs to 84 residues: Small ribosomal subunit protein bS20 (84 aa).

The tract at residues 1 to 25 (MANIVSNEKTYRHTQKVRKENHAKM) is disordered.

This sequence belongs to the bacterial ribosomal protein bS20 family.

Its function is as follows. Binds directly to 16S ribosomal RNA. This chain is Small ribosomal subunit protein bS20, found in Ureaplasma urealyticum serovar 10 (strain ATCC 33699 / Western).